A 330-amino-acid chain; its full sequence is Putative [LysW]-L-2-aminoadipate/[LysW]-L-glutamate phosphate reductase (330 aa).

10–13 serves as a coordination point for NADP(+); the sequence is SGYI. The active site involves Cys142. Position 297 (Asn297) interacts with NADP(+).

The protein belongs to the NAGSA dehydrogenase family. Type 1 subfamily. LysY sub-subfamily.

The protein localises to the cytoplasm. It catalyses the reaction [amino-group carrier protein]-C-terminal-N-(1-carboxy-5-oxopentan-1-yl)-L-glutamine + phosphate + NADP(+) = [amino-group carrier protein]-C-terminal-N-(1-carboxy-5-phosphooxy-5-oxopentan-1-yl)-L-glutamine + NADPH + H(+). The catalysed reaction is [amino-group carrier protein]-C-terminal-gamma-(L-glutamyl-5-semialdehyde)-L-glutamate + phosphate + NADP(+) = [amino-group carrier protein]-C-terminal-gamma-(5-phospho-L-glutamyl)-L-glutamate + NADPH + H(+). Its pathway is amino-acid biosynthesis; L-lysine biosynthesis via AAA pathway; L-lysine from L-alpha-aminoadipate (Thermus route): step 3/5. It functions in the pathway amino-acid biosynthesis; L-arginine biosynthesis. In terms of biological role, involved in both the arginine and lysine biosynthetic pathways. This is Putative [LysW]-L-2-aminoadipate/[LysW]-L-glutamate phosphate reductase from Pyrococcus furiosus (strain ATCC 43587 / DSM 3638 / JCM 8422 / Vc1).